Here is a 359-residue protein sequence, read N- to C-terminus: MPSDTSANLYDLTRPALGALLSGWGFGPYHRDQLWTALYRRHATTFDELDGLKPELLRMLREHTRLGQLATHHESFSSDGFTHKLLLRLDDGQTIETVLMRFKGRATVCISTQAGCAMGCVFCATGQMGLSRHLTPGEIVGQILHVNRILRASGETLRNVVLMGMGEPLHNYEHTMSAVDVLVDALGLAMGPRFITLSTVGVVPGIRRLADEERPIHLAVSLHGATDAERAALVPAGRRWPLDELMDACRYYSEKRKRRIFFEWTLISGRNDTAEHAHTLGQLLRGMDAHVNVIPLNPTVGYDGGPSRPESVRAFQDVLATYDVPSTVRQRRGIDIDAGCGQLKATVERRSRRSLPTSA.

Glutamate 96 functions as the Proton acceptor in the catalytic mechanism. The Radical SAM core domain maps to 102–335 (FKGRATVCIS…STVRQRRGID (234 aa)). Cysteine 109 and cysteine 340 are oxidised to a cystine. Positions 116, 120, and 123 each coordinate [4Fe-4S] cluster. S-adenosyl-L-methionine contacts are provided by residues 166-167 (GE), serine 198, 221-223 (SLH), and asparagine 297. Cysteine 340 acts as the S-methylcysteine intermediate in catalysis.

This sequence belongs to the radical SAM superfamily. RlmN family. [4Fe-4S] cluster is required as a cofactor.

It localises to the cytoplasm. The enzyme catalyses adenosine(2503) in 23S rRNA + 2 reduced [2Fe-2S]-[ferredoxin] + 2 S-adenosyl-L-methionine = 2-methyladenosine(2503) in 23S rRNA + 5'-deoxyadenosine + L-methionine + 2 oxidized [2Fe-2S]-[ferredoxin] + S-adenosyl-L-homocysteine. It catalyses the reaction adenosine(37) in tRNA + 2 reduced [2Fe-2S]-[ferredoxin] + 2 S-adenosyl-L-methionine = 2-methyladenosine(37) in tRNA + 5'-deoxyadenosine + L-methionine + 2 oxidized [2Fe-2S]-[ferredoxin] + S-adenosyl-L-homocysteine. In terms of biological role, specifically methylates position 2 of adenine 2503 in 23S rRNA and position 2 of adenine 37 in tRNAs. m2A2503 modification seems to play a crucial role in the proofreading step occurring at the peptidyl transferase center and thus would serve to optimize ribosomal fidelity. This is Dual-specificity RNA methyltransferase RlmN 1 from Myxococcus xanthus (strain DK1622).